A 41-amino-acid chain; its full sequence is Photosystem I reaction center subunit IX (41 aa).

A helical transmembrane segment spans residues 7–27 (YLSTAPVLLTIWLTFTAGFII).

Belongs to the PsaJ family.

It localises to the plastid. The protein localises to the chloroplast thylakoid membrane. In terms of biological role, may help in the organization of the PsaE and PsaF subunits. In Phaeodactylum tricornutum (strain CCAP 1055/1), this protein is Photosystem I reaction center subunit IX.